The primary structure comprises 261 residues: Phosphonates import ATP-binding protein PhnC (261 aa).

Positions 8 to 253 (LRVENLSKTY…WFRRIYGEGA (246 aa)) constitute an ABC transporter domain. 41 to 48 (GLSGSGKS) serves as a coordination point for ATP.

Belongs to the ABC transporter superfamily. Phosphonates importer (TC 3.A.1.9.1) family. As to quaternary structure, the complex is composed of two ATP-binding proteins (PhnC), two transmembrane proteins (PhnE) and a solute-binding protein (PhnD).

It is found in the cell inner membrane. The enzyme catalyses phosphonate(out) + ATP + H2O = phosphonate(in) + ADP + phosphate + H(+). In terms of biological role, part of the ABC transporter complex PhnCDE involved in phosphonates import. Responsible for energy coupling to the transport system. The sequence is that of Phosphonates import ATP-binding protein PhnC from Bdellovibrio bacteriovorus (strain ATCC 15356 / DSM 50701 / NCIMB 9529 / HD100).